A 369-amino-acid polypeptide reads, in one-letter code: Dual specificity protein phosphatase 1-A (369 aa).

A Rhodanese domain is found at 21–138 (RAHKCLILDC…FSAQCPEFCT (118 aa)). Position 168 is a phosphothreonine; by MAPK1 (threonine 168). Residues 175 to 316 (GPVEILPFLY…LLQFESQVLA (142 aa)) enclose the Tyrosine-protein phosphatase domain. Cysteine 260 functions as the Phosphocysteine intermediate in the catalytic mechanism.

Belongs to the protein-tyrosine phosphatase family. Non-receptor class dual specificity subfamily. Phosphorylated by MAPK1/ERK2 at Thr-168 and at one or more serine residues in a progesterone-dependent manner. Phosphorylation reduces its rate of degradation but does not seem to affect phosphatase activity. Expressed in XIK-2 kidney cells.

It localises to the nucleus. It catalyses the reaction O-phospho-L-seryl-[protein] + H2O = L-seryl-[protein] + phosphate. It carries out the reaction O-phospho-L-threonyl-[protein] + H2O = L-threonyl-[protein] + phosphate. The enzyme catalyses O-phospho-L-tyrosyl-[protein] + H2O = L-tyrosyl-[protein] + phosphate. Its function is as follows. Dual specificity phosphatase that dephosphorylates MAP kinase MAPK1/ERK2 on both 'Thr-188' and 'Tyr-190', regulating its activity during the meiotic cell cycle. The protein is Dual specificity protein phosphatase 1-A of Xenopus laevis (African clawed frog).